The primary structure comprises 308 residues: 4-hydroxy-3-methylbut-2-enyl diphosphate reductase (308 aa).

A [4Fe-4S] cluster-binding site is contributed by C12. (2E)-4-hydroxy-3-methylbut-2-enyl diphosphate-binding residues include H43 and H77. Dimethylallyl diphosphate-binding residues include H43 and H77. Positions 43 and 77 each coordinate isopentenyl diphosphate. C99 provides a ligand contact to [4Fe-4S] cluster. Position 127 (H127) interacts with (2E)-4-hydroxy-3-methylbut-2-enyl diphosphate. H127 lines the dimethylallyl diphosphate pocket. H127 provides a ligand contact to isopentenyl diphosphate. Residue E129 is the Proton donor of the active site. Residue T167 participates in (2E)-4-hydroxy-3-methylbut-2-enyl diphosphate binding. C197 contributes to the [4Fe-4S] cluster binding site. 4 residues coordinate (2E)-4-hydroxy-3-methylbut-2-enyl diphosphate: S225, S226, N227, and S269. Dimethylallyl diphosphate-binding residues include S225, S226, N227, and S269. The isopentenyl diphosphate site is built by S225, S226, N227, and S269.

Belongs to the IspH family. [4Fe-4S] cluster is required as a cofactor.

It catalyses the reaction isopentenyl diphosphate + 2 oxidized [2Fe-2S]-[ferredoxin] + H2O = (2E)-4-hydroxy-3-methylbut-2-enyl diphosphate + 2 reduced [2Fe-2S]-[ferredoxin] + 2 H(+). The catalysed reaction is dimethylallyl diphosphate + 2 oxidized [2Fe-2S]-[ferredoxin] + H2O = (2E)-4-hydroxy-3-methylbut-2-enyl diphosphate + 2 reduced [2Fe-2S]-[ferredoxin] + 2 H(+). It participates in isoprenoid biosynthesis; dimethylallyl diphosphate biosynthesis; dimethylallyl diphosphate from (2E)-4-hydroxy-3-methylbutenyl diphosphate: step 1/1. It functions in the pathway isoprenoid biosynthesis; isopentenyl diphosphate biosynthesis via DXP pathway; isopentenyl diphosphate from 1-deoxy-D-xylulose 5-phosphate: step 6/6. Functionally, catalyzes the conversion of 1-hydroxy-2-methyl-2-(E)-butenyl 4-diphosphate (HMBPP) into a mixture of isopentenyl diphosphate (IPP) and dimethylallyl diphosphate (DMAPP). Acts in the terminal step of the DOXP/MEP pathway for isoprenoid precursor biosynthesis. The protein is 4-hydroxy-3-methylbut-2-enyl diphosphate reductase of Wolbachia pipientis subsp. Culex pipiens (strain wPip).